The primary structure comprises 604 residues: Lipoprotein LpqB (604 aa).

Positions 1–27 (MTMRAARLSGSTGLTAALVAVLLVLTG) are cleaved as a signal peptide. Residue C28 is the site of N-palmitoyl cysteine attachment. The S-diacylglycerol cysteine moiety is linked to residue C28. Positions 35-60 (SAPQALGTIDREPTSEGPTPPIAGRD) are disordered.

It belongs to the LpqB lipoprotein family.

It is found in the cell membrane. The protein is Lipoprotein LpqB of Nocardia farcinica (strain IFM 10152).